The primary structure comprises 285 residues: Eukaryotic translation initiation factor 3 subunit F-2 (285 aa).

Residues Val11–Gly145 enclose the MPN domain.

This sequence belongs to the eIF-3 subunit F family. As to quaternary structure, component of the eukaryotic translation initiation factor 3 (eIF-3) complex. The eIF-3 complex interacts with pix.

It localises to the cytoplasm. Its function is as follows. Component of the eukaryotic translation initiation factor 3 (eIF-3) complex, which is involved in protein synthesis of a specialized repertoire of mRNAs and, together with other initiation factors, stimulates binding of mRNA and methionyl-tRNAi to the 40S ribosome. The eIF-3 complex specifically targets and initiates translation of a subset of mRNAs involved in cell proliferation. This Drosophila erecta (Fruit fly) protein is Eukaryotic translation initiation factor 3 subunit F-2.